A 634-amino-acid chain; its full sequence is NRPS-independent siderophore synthetase rfs (634 aa).

Its function is as follows. NRPS-independent siderophore synthetase that catalyzes the rhizoferrin biosynthesis from citrate and diaminobutane via an ATP-dependent condensation of citrate with diaminobutane followed by the addition of a second citrate to the monocitryl-diaminobutane intermediate. Can also use as substrates the citrate and diaminobutane homologs oxaloacetic acid, diaminopropane, diaminobutane, diaminopentane, tricarballylic acid, hydroxylamine and ornithine. Forms only a mono-substituted intermediate with oxaloacetic acid and diaminopentane whereas both mono-citryl intermediates and full rhizoferrin derivatives were detected when diaminopropane, and ornithine were used as substrates. Tricarballylic acid only forms a rhizoferrin derivative, but no mono-substituted intermediate. The polypeptide is NRPS-independent siderophore synthetase rfs (Rhizopus delemar (strain RA 99-880 / ATCC MYA-4621 / FGSC 9543 / NRRL 43880) (Mucormycosis agent)).